The sequence spans 198 residues: HTH-type transcriptional regulator BetI (198 aa).

The region spanning 8 to 68 is the HTH tetR-type domain; it reads KIRRPQLVSA…ETMRDILRQL (61 aa). A DNA-binding region (H-T-H motif) is located at residues 31–50; that stretch reads SVSLISQEAGVSSGIINHYF.

The protein operates within amine and polyamine biosynthesis; betaine biosynthesis via choline pathway [regulation]. Functionally, repressor involved in the biosynthesis of the osmoprotectant glycine betaine. It represses transcription of the choline transporter BetT and the genes of BetAB involved in the synthesis of glycine betaine. This is HTH-type transcriptional regulator BetI from Vibrio vulnificus (strain YJ016).